Here is a 450-residue protein sequence, read N- to C-terminus: Adenylosuccinate lyase (450 aa).

N(6)-(1,2-dicarboxyethyl)-AMP is bound by residues 9 to 10 (RY), 75 to 77 (HHD), and 101 to 102 (TS). Histidine 149 acts as the Proton donor/acceptor in catalysis. Glutamine 223 serves as a coordination point for N(6)-(1,2-dicarboxyethyl)-AMP. Catalysis depends on serine 273, which acts as the Proton donor/acceptor. Residues serine 274, 279–281 (KRN), and 318–322 (SVERV) contribute to the N(6)-(1,2-dicarboxyethyl)-AMP site.

The protein belongs to the lyase 1 family. Adenylosuccinate lyase subfamily. As to quaternary structure, homotetramer. Residues from neighboring subunits contribute catalytic and substrate-binding residues to each active site.

It carries out the reaction N(6)-(1,2-dicarboxyethyl)-AMP = fumarate + AMP. The catalysed reaction is (2S)-2-[5-amino-1-(5-phospho-beta-D-ribosyl)imidazole-4-carboxamido]succinate = 5-amino-1-(5-phospho-beta-D-ribosyl)imidazole-4-carboxamide + fumarate. It participates in purine metabolism; AMP biosynthesis via de novo pathway; AMP from IMP: step 2/2. Its pathway is purine metabolism; IMP biosynthesis via de novo pathway; 5-amino-1-(5-phospho-D-ribosyl)imidazole-4-carboxamide from 5-amino-1-(5-phospho-D-ribosyl)imidazole-4-carboxylate: step 2/2. Catalyzes two reactions in de novo purine nucleotide biosynthesis. Catalyzes the breakdown of 5-aminoimidazole- (N-succinylocarboxamide) ribotide (SAICAR or 2-[5-amino-1-(5-phospho-beta-D-ribosyl)imidazole-4-carboxamido]succinate) to 5-aminoimidazole-4-carboxamide ribotide (AICAR or 5-amino-1-(5-phospho-beta-D-ribosyl)imidazole-4-carboxamide) and fumarate, and of adenylosuccinate (ADS or N(6)-(1,2-dicarboxyethyl)-AMP) to adenosine monophosphate (AMP) and fumarate. The protein is Adenylosuccinate lyase (purB) of Pyrococcus horikoshii (strain ATCC 700860 / DSM 12428 / JCM 9974 / NBRC 100139 / OT-3).